We begin with the raw amino-acid sequence, 309 residues long: Aspartate carbamoyltransferase catalytic subunit (309 aa).

Residues Arg-55 and Thr-56 each contribute to the carbamoyl phosphate site. Lys-85 contributes to the L-aspartate binding site. Positions 106, 135, and 138 each coordinate carbamoyl phosphate. 2 residues coordinate L-aspartate: Arg-168 and Arg-230. 2 residues coordinate carbamoyl phosphate: Leu-268 and Pro-269.

It belongs to the aspartate/ornithine carbamoyltransferase superfamily. ATCase family. In terms of assembly, heterododecamer (2C3:3R2) of six catalytic PyrB chains organized as two trimers (C3), and six regulatory PyrI chains organized as three dimers (R2).

It carries out the reaction carbamoyl phosphate + L-aspartate = N-carbamoyl-L-aspartate + phosphate + H(+). It participates in pyrimidine metabolism; UMP biosynthesis via de novo pathway; (S)-dihydroorotate from bicarbonate: step 2/3. Its function is as follows. Catalyzes the condensation of carbamoyl phosphate and aspartate to form carbamoyl aspartate and inorganic phosphate, the committed step in the de novo pyrimidine nucleotide biosynthesis pathway. The chain is Aspartate carbamoyltransferase catalytic subunit from Aliivibrio fischeri (strain MJ11) (Vibrio fischeri).